The chain runs to 707 residues: MDNSIHVKREIQLPSTSPAGFPGRESVTVVDLCSSDDDSDIGEVAGGLEKVGNNFVGLKRGRDTFGGSSEVDRNNVKKVTTLAELGVGLPEGFGQSNPPESLTHPIPANPCNVFRPVPPPPPPPYAGTSGKIGGCKQFWKAGDYEGAAGDNWDLSSGGFDHVRVHPKFLHSNATSHKWALGAFAELLDNALDEVASGATYVKVDMLENNKGGNRMLLIEDNGGGMDPEKMRQCMSLGYSAKSKLANTIGQYGNGFKTSTMRLGADVIVFSRCPGKDGKSSTQSIGLLSYTFLRSTGKEDIVVPMLDYERRDPEWSKIIRSSTRDWDKNVETIIQWSPFSSEEDLLHQFDLMKDRGTRIIIYNLWEDDQGMLELDFDADPYDIQLRGVNREERNIKMASQFPNSRHFLTYKHSLRSYVSILYLRIPPGFRIILRGIDVEHHSVVNDMMQTEQITYRPQSESYGVVTNMSAIVIIGFVKDAKHHVDVQGFNVYHKNRLIKPFWRIWNATGSDGRGVIGVLEANFVEPAHDKQGFERTTVLARLESRLVQMQKTYWSTNCHKIGYAPRRREKSAYGYDNRDSSPENDREGPSSIKTPTPASDKFYSSSYPNHNGDNGVSGKDGARLQEELRREKERRKALEVEVQLSRQKIEEMKKEQENLIEIFSEERDRRDGEEEVLRNKLEEASNTIDDLLNKIKKMEGSKVPSWRH.

Basic and acidic residues-rich tracts occupy residues 1–11 (MDNSIHVKREI) and 575–587 (DNRD…DREG). Disordered stretches follow at residues 1–22 (MDNS…AGFP) and 568–619 (EKSA…SGKD). Over residues 590–613 (SIKTPTPASDKFYSSSYPNHNGDN) the composition is skewed to polar residues. Positions 620–701 (GARLQEELRR…NKIKKMEGSK (82 aa)) form a coiled coil. A Nuclear localization signal motif is present at residues 633–640 (RRKALEVE).

Belongs to the MORC ATPase protein family. In terms of assembly, homodimer and heterodimer. Component of an RNA-directed DNA methylation (RdDM) complex. Forms homomeric complexes. The cofactor is Mg(2+). Requires Mn(2+) as cofactor.

The protein localises to the nucleus. Functionally, exhibits ATPase activity. Binds DNA/RNA in a non-specific manner and exhibits endonuclease activity. Probably involved in DNA repair. Involved in RNA-directed DNA methylation (RdDM) as a component of the RdDM machinery and required for gene silencing. May also be involved in the regulation of chromatin architecture to maintain gene silencing. Together with MORC4, acts to suppress a wide set of non-methylated protein-coding genes, especially involved in pathogen response. Positive regulators of defense against the oomycete Hyaloperonospora arabidopsidis (Hpa). The sequence is that of Protein MICRORCHIDIA 7 from Arabidopsis thaliana (Mouse-ear cress).